We begin with the raw amino-acid sequence, 105 residues long: ATPase inhibitor A, mitochondrial (105 aa).

Residues 17–52 (MSSDQLGELGTGAGKGGGGGGSVRAAGGSFGRREAA) form a disordered region. The tract at residues 22–51 (LGELGTGAGKGGGGGGSVRAAGGSFGRREA) is N-terminal inhibitory region. The segment covering 25–38 (LGTGAGKGGGGGGS) has biased composition (gly residues). A coiled-coil region spans residues 58–105 (FRQKEREQLAALKNHHEEEIDHHKKEIERLQREIDRHKGKIRKLKHDD). An antiparallel alpha-helical coiled coil region region spans residues 73–105 (HEEEIDHHKKEIERLQREIDRHKGKIRKLKHDD).

Belongs to the ATPase inhibitor family. As to quaternary structure, homodimer; represents the active form and is present at a pH value below 6.5. Homotetramer; represents the inactive form and is present at a pH value above 7.0.

It localises to the mitochondrion. In terms of biological role, endogenous F(1)F(o)-ATPase inhibitor limiting ATP depletion when the mitochondrial membrane potential falls below a threshold and the F(1)F(o)-ATP synthase starts hydrolyzing ATP to pump protons out of the mitochondrial matrix. Required to avoid the consumption of cellular ATP when the F(1)F(o)-ATP synthase enzyme acts as an ATP hydrolase. Indirectly acts as a regulator of heme synthesis in erythroid tissues: regulates heme synthesis by modulating the mitochondrial pH and redox potential, allowing fech to efficiently catalyze the incorporation of iron into protoporphyrin IX to produce heme. This chain is ATPase inhibitor A, mitochondrial, found in Danio rerio (Zebrafish).